A 147-amino-acid chain; its full sequence is Ponticulin-like protein C4 (147 aa).

The first 20 residues, 1–20 (MKFTKSLLLLIVAVFASSNA), serve as a signal peptide directing secretion. Asparagine 118 is lipidated: GPI-like-anchor amidated asparagine. An N-linked (GlcNAc...) asparagine glycan is attached at asparagine 118. Residues 119 to 147 (SSESDSSDSTRIGASFALAAAALLSMIAL) constitute a propeptide, removed in mature form.

Belongs to the ponticulin family. The GPI-like-anchor contains a phosphoceramide group, rather than a phosphatidyl group.

It localises to the cell membrane. The chain is Ponticulin-like protein C4 (ponC4) from Dictyostelium discoideum (Social amoeba).